The following is a 335-amino-acid chain: MWERIFLAAALALMITLILGPLMIPVLRVMKFGQTIREEGPKRHLAKAGTPTMGGIIFLVGIVVSALIMAEKPTSLEMVMVISAMLGYGLIGFIDDFIKVVLHRSLGLRAYQKLIGQIALALLLTWGANRYLGRGTDLVIPFTSIHLELGLFYYPFVSFIIVGITNAVNLTDGLDGLAAGTTLFSMLSYVSIATLAASQGGGVAILAYESDLAVFAAAAVGGCFGFLRFNKNPARVFMGDTGSLALGGALVGLAVLTKTELILLIIGGVYVVEAISVILQVFSYQTTGKRIFRMSPLHHHFELGGWNEWKVVMVFWLASLLCGVLGVIAYMAGMF.

Helical transmembrane passes span 5–25 (IFLA…LMIP), 50–70 (TPTM…LIMA), 78–98 (MVMV…DDFI), 114–133 (LIGQ…RYLG), 145–165 (IHLE…VGIT), 177–197 (LAAG…TLAA), 200–220 (GGGV…AAAV), 236–256 (VFMG…LAVL), 262–282 (ILLI…LQVF), and 311–331 (VVMV…IAYM).

Belongs to the glycosyltransferase 4 family. MraY subfamily. Mg(2+) is required as a cofactor.

The protein localises to the cell membrane. The catalysed reaction is UDP-N-acetyl-alpha-D-muramoyl-L-alanyl-gamma-D-glutamyl-meso-2,6-diaminopimeloyl-D-alanyl-D-alanine + di-trans,octa-cis-undecaprenyl phosphate = di-trans,octa-cis-undecaprenyl diphospho-N-acetyl-alpha-D-muramoyl-L-alanyl-D-glutamyl-meso-2,6-diaminopimeloyl-D-alanyl-D-alanine + UMP. Its pathway is cell wall biogenesis; peptidoglycan biosynthesis. Catalyzes the initial step of the lipid cycle reactions in the biosynthesis of the cell wall peptidoglycan: transfers peptidoglycan precursor phospho-MurNAc-pentapeptide from UDP-MurNAc-pentapeptide onto the lipid carrier undecaprenyl phosphate, yielding undecaprenyl-pyrophosphoryl-MurNAc-pentapeptide, known as lipid I. This Desulfitobacterium hafniense (strain DSM 10664 / DCB-2) protein is Phospho-N-acetylmuramoyl-pentapeptide-transferase.